Here is a 201-residue protein sequence, read N- to C-terminus: Large ribosomal subunit protein uL4 (201 aa).

Positions 45–72 (AQKTRAEVTGSGKKPWRQKGTGRARAGS) are disordered.

It belongs to the universal ribosomal protein uL4 family. In terms of assembly, part of the 50S ribosomal subunit.

In terms of biological role, one of the primary rRNA binding proteins, this protein initially binds near the 5'-end of the 23S rRNA. It is important during the early stages of 50S assembly. It makes multiple contacts with different domains of the 23S rRNA in the assembled 50S subunit and ribosome. Functionally, forms part of the polypeptide exit tunnel. This Shewanella frigidimarina (strain NCIMB 400) protein is Large ribosomal subunit protein uL4.